Reading from the N-terminus, the 557-residue chain is Membrane protein insertase YidC (557 aa).

Residues 3–23 (NLRPVLYLSMLLVLFLIWQAW) traverse the membrane as a helical segment. Residues 34–60 (APGAQEQVMDRDGVPAPPQDVPDAPVS) are disordered. The next 4 membrane-spanning stretches (helical) occupy residues 366–386 (VVGN…LVFY), 436–456 (LGGC…YWVL), 480–500 (YFIL…LNPA), and 514–534 (PFVF…YWFV).

It belongs to the OXA1/ALB3/YidC family. Type 1 subfamily. As to quaternary structure, interacts with the Sec translocase complex via SecD. Specifically interacts with transmembrane segments of nascent integral membrane proteins during membrane integration.

Its subcellular location is the cell inner membrane. Its function is as follows. Required for the insertion and/or proper folding and/or complex formation of integral membrane proteins into the membrane. Involved in integration of membrane proteins that insert both dependently and independently of the Sec translocase complex, as well as at least some lipoproteins. Aids folding of multispanning membrane proteins. The sequence is that of Membrane protein insertase YidC from Thioalkalivibrio sulfidiphilus (strain HL-EbGR7).